The sequence spans 183 residues: Photosystem I assembly protein Ycf4 (183 aa).

Transmembrane regions (helical) follow at residues 21–43 and 63–85; these read YIWG…SSYL and LVMC…LILW.

Belongs to the Ycf4 family.

It is found in the plastid. Its subcellular location is the chloroplast thylakoid membrane. In terms of biological role, seems to be required for the assembly of the photosystem I complex. This chain is Photosystem I assembly protein Ycf4, found in Chlorella vulgaris (Green alga).